Here is a 410-residue protein sequence, read N- to C-terminus: Cysteine desulfurase IscS (410 aa).

Residues 80–81, Asn-160, Gln-188, and 208–210 contribute to the pyridoxal 5'-phosphate site; these read AT and SGH. Residue Lys-211 is modified to N6-(pyridoxal phosphate)lysine. Thr-248 contacts pyridoxal 5'-phosphate. The active-site Cysteine persulfide intermediate is Cys-334. Cys-334 is a [2Fe-2S] cluster binding site.

The protein belongs to the class-V pyridoxal-phosphate-dependent aminotransferase family. NifS/IscS subfamily. As to quaternary structure, homodimer. Forms a heterotetramer with IscU, interacts with other sulfur acceptors. Pyridoxal 5'-phosphate is required as a cofactor.

The protein resides in the cytoplasm. It catalyses the reaction (sulfur carrier)-H + L-cysteine = (sulfur carrier)-SH + L-alanine. The protein operates within cofactor biosynthesis; iron-sulfur cluster biosynthesis. Its function is as follows. Master enzyme that delivers sulfur to a number of partners involved in Fe-S cluster assembly, tRNA modification or cofactor biosynthesis. Catalyzes the removal of elemental sulfur atoms from cysteine to produce alanine. Functions as a sulfur delivery protein for Fe-S cluster synthesis onto IscU, an Fe-S scaffold assembly protein, as well as other S acceptor proteins. The sequence is that of Cysteine desulfurase IscS from Rickettsia massiliae (strain Mtu5).